The primary structure comprises 321 residues: Malate dehydrogenase (321 aa).

NAD(+)-binding positions include 11 to 16 (GSGNIG) and D35. Substrate-binding residues include R84 and R90. NAD(+)-binding positions include N97 and 120–122 (ITN). Residues N122 and R153 each coordinate substrate. H177 acts as the Proton acceptor in catalysis.

The protein belongs to the LDH/MDH superfamily. MDH type 3 family.

The enzyme catalyses (S)-malate + NAD(+) = oxaloacetate + NADH + H(+). Functionally, catalyzes the reversible oxidation of malate to oxaloacetate. This Rickettsia peacockii (strain Rustic) protein is Malate dehydrogenase.